The sequence spans 821 residues: DNA ligase (821 aa).

Residues 33–37 (DVDYD), 82–83 (SL), and Glu113 contribute to the NAD(+) site. Lys115 (N6-AMP-lysine intermediate) is an active-site residue. NAD(+) is bound by residues Arg136, Glu173, Lys290, and Lys314. Cys408, Cys411, Cys426, and Cys432 together coordinate Zn(2+). One can recognise a BRCT domain in the interval 741–821 (IVAGPLDGQT…RLLAYLAEHE (81 aa)).

Belongs to the NAD-dependent DNA ligase family. LigA subfamily. Mg(2+) serves as cofactor. It depends on Mn(2+) as a cofactor.

The catalysed reaction is NAD(+) + (deoxyribonucleotide)n-3'-hydroxyl + 5'-phospho-(deoxyribonucleotide)m = (deoxyribonucleotide)n+m + AMP + beta-nicotinamide D-nucleotide.. DNA ligase that catalyzes the formation of phosphodiester linkages between 5'-phosphoryl and 3'-hydroxyl groups in double-stranded DNA using NAD as a coenzyme and as the energy source for the reaction. It is essential for DNA replication and repair of damaged DNA. In Stenotrophomonas maltophilia (strain K279a), this protein is DNA ligase.